The chain runs to 213 residues: Ribosomal RNA large subunit methyltransferase E (213 aa).

S-adenosyl-L-methionine is bound by residues G60, W62, D80, D96, and D121. K161 acts as the Proton acceptor in catalysis.

Belongs to the class I-like SAM-binding methyltransferase superfamily. RNA methyltransferase RlmE family.

Its subcellular location is the cytoplasm. The catalysed reaction is uridine(2552) in 23S rRNA + S-adenosyl-L-methionine = 2'-O-methyluridine(2552) in 23S rRNA + S-adenosyl-L-homocysteine + H(+). Specifically methylates the uridine in position 2552 of 23S rRNA at the 2'-O position of the ribose in the fully assembled 50S ribosomal subunit. This chain is Ribosomal RNA large subunit methyltransferase E, found in Xylella fastidiosa (strain M23).